The chain runs to 342 residues: Delta(6)-protoilludene synthase (342 aa).

The Mg(2+) site is built by Asp81, Asn217, Ser221, and Glu225. The DDXXD motif signature appears at 81-85; it reads DEYSD. Positions 306 and 307 each coordinate (2E,6E)-farnesyl diphosphate.

This sequence belongs to the terpene synthase family. Requires Mg(2+) as cofactor.

The catalysed reaction is (2E,6E)-farnesyl diphosphate = Delta(6)-protoilludene + diphosphate. Delta(6)-protoilludene synthase, part of the gene cluster that mediates the biosynthesis of melleolides, a range of antifungal and phytotoxic polyketide derivatives composed of an orsellinic acid (OA) moiety esterified to various sesquiterpene alcohols. The first step in melleolides biosynthesis is performed by the delta(6)-protoilludene synthase PRO1 which catalyzes the cyclization of farnesyl diphosphate to protoilludene. The orsellinic acid synthase armB produces OA by condensing acetyl-CoA with 3 malonyl-CoA units in a three-round chain elongation reaction folowed by a C2-C7 ring closure. ArmB further catalyzes the trans-esterification of OA to the various sesquiterpene alcohols resulting from the hydroxylation of protoilludene. The melleolides cluster also includes 5 cytochrome P450 monooxygenases, 4 NAD(+)-dependent oxidoreductases, one flavin-dependent oxidoreductase, and one O-methyltransferase. The cytochrome P450 monooxygenases may be involved in protoilludene hydroxylation to elaborate melleolides with multiple alcohol groups, such as melleolide D, which carries alcohol functionalities at C-4, C-5, C-10, and C-13. The role of the NAD(+)-dependent enzymes remains unknown. Numerous melleolides, including arnamial, show 5'-O-methylation of the aromatic moiety which may be catalyzed by the methyltransferase encoded in the cluster. The flavin-dependent oxidoreductase might represent the dehydrogenase yielding the aldehyde in position 1 of arnamial and other melleolides. Finally, several halogenases, localized outside of the cluster, are able to catalyze the transfer of a single chlorine atom to the melleolide backbone, resulting in a 6'-chloromelleolide product. The chain is Delta(6)-protoilludene synthase from Armillaria ostoyae (Armillaria root rot fungus).